A 305-amino-acid polypeptide reads, in one-letter code: MDWVAVIVSIIPFVGVLLAVGFYTLLERKILAIIMIRKGPSKVSYMGILQPFSDAGKLLCKEFIVPTRANVGPFILAPALMLAISLLGWLLYPYKSAEVFYVFGVILFMVITSVSVYGVMMSGWASNSKYSLLGAVRAMAQSISYEIPMGFIFFCVVLCSGVFMFQEISVFQQSLFFFFLPLCVVMLVWMLCMLAETNRAPFDFVEGESELVSGYNVEYSGGGFAVMFIAEYSSILLSSVMSAAMFFGGNEALVGFFMMVFAIFFVVVRASLPRLRYDKLMNLCWTVLLCVMLTASVCVVVLVGV.

8 helical membrane-spanning segments follow: residues 3 to 23 (WVAV…VGFY), 71 to 91 (VGPF…GWLL), 99 to 119 (VFYV…VYGV), 145 to 165 (YEIP…VFMF), 175 to 195 (LFFF…CMLA), 221 to 241 (GGGF…SSVM), 246 to 266 (FFGG…IFFV), and 285 to 305 (WTVL…LVGV).

The protein belongs to the complex I subunit 1 family.

It is found in the mitochondrion inner membrane. The catalysed reaction is a ubiquinone + NADH + 5 H(+)(in) = a ubiquinol + NAD(+) + 4 H(+)(out). In terms of biological role, core subunit of the mitochondrial membrane respiratory chain NADH dehydrogenase (Complex I) that is believed to belong to the minimal assembly required for catalysis. Complex I functions in the transfer of electrons from NADH to the respiratory chain. The immediate electron acceptor for the enzyme is believed to be ubiquinone. The sequence is that of NADH-ubiquinone oxidoreductase chain 1 (ND1) from Mytilus edulis (Blue mussel).